The following is a 117-amino-acid chain: G antigen 12H (117 aa).

A disordered region spans residues Met-1–Cys-117. Acidic residues-rich tracts occupy residues Phe-32–Glu-45 and Glu-87–Glu-96. Residues Glu-103–Cys-117 are compositionally biased toward basic and acidic residues.

It belongs to the GAGE family.

This Homo sapiens (Human) protein is G antigen 12H (GAGE12H).